The sequence spans 89 residues: Small ribosomal subunit protein uS15 (89 aa).

The protein belongs to the universal ribosomal protein uS15 family. Part of the 30S ribosomal subunit. Forms a bridge to the 50S subunit in the 70S ribosome, contacting the 23S rRNA.

Its function is as follows. One of the primary rRNA binding proteins, it binds directly to 16S rRNA where it helps nucleate assembly of the platform of the 30S subunit by binding and bridging several RNA helices of the 16S rRNA. In terms of biological role, forms an intersubunit bridge (bridge B4) with the 23S rRNA of the 50S subunit in the ribosome. The polypeptide is Small ribosomal subunit protein uS15 (Pseudomonas savastanoi pv. phaseolicola (strain 1448A / Race 6) (Pseudomonas syringae pv. phaseolicola (strain 1448A / Race 6))).